We begin with the raw amino-acid sequence, 435 residues long: Tol-Pal system protein TolB (435 aa).

The signal sequence occupies residues 1-20 (MRKIIAGVFIFVFLISNLYA).

This sequence belongs to the TolB family. The Tol-Pal system is composed of five core proteins: the inner membrane proteins TolA, TolQ and TolR, the periplasmic protein TolB and the outer membrane protein Pal. They form a network linking the inner and outer membranes and the peptidoglycan layer.

It is found in the periplasm. Part of the Tol-Pal system, which plays a role in outer membrane invagination during cell division and is important for maintaining outer membrane integrity. The chain is Tol-Pal system protein TolB from Francisella tularensis subsp. holarctica (strain LVS).